A 513-amino-acid polypeptide reads, in one-letter code: ATP synthase subunit alpha (513 aa).

171–178 contacts ATP; sequence GDRQIGKT.

This sequence belongs to the ATPase alpha/beta chains family. F-type ATPases have 2 components, CF(1) - the catalytic core - and CF(0) - the membrane proton channel. CF(1) has five subunits: alpha(3), beta(3), gamma(1), delta(1), epsilon(1). CF(0) has three main subunits: a(1), b(2) and c(9-12). The alpha and beta chains form an alternating ring which encloses part of the gamma chain. CF(1) is attached to CF(0) by a central stalk formed by the gamma and epsilon chains, while a peripheral stalk is formed by the delta and b chains.

Its subcellular location is the cell inner membrane. The enzyme catalyses ATP + H2O + 4 H(+)(in) = ADP + phosphate + 5 H(+)(out). In terms of biological role, produces ATP from ADP in the presence of a proton gradient across the membrane. The alpha chain is a regulatory subunit. This Wolbachia sp. subsp. Drosophila simulans (strain wRi) protein is ATP synthase subunit alpha.